A 151-amino-acid chain; its full sequence is MTPAVSPAHTVLFEAKARKGISFEQIGKAIGRDEVWVASAFYGQAKFNEEELKKLSEVLEISSAQIVKELGDQWFPNRGLGPVPPSDPVIYRLFEGVLVYGHPIKAIIHEKFGDGIMSMIDCNINVERKPDPKGDRVVVTFDGKFLPYSKW.

Catalysis depends on residues Arg-92, Glu-95, and Ser-118.

It belongs to the cyanase family.

The enzyme catalyses cyanate + hydrogencarbonate + 3 H(+) = NH4(+) + 2 CO2. Catalyzes the reaction of cyanate with bicarbonate to produce ammonia and carbon dioxide. In Coprinopsis cinerea (strain Okayama-7 / 130 / ATCC MYA-4618 / FGSC 9003) (Inky cap fungus), this protein is Cyanate hydratase.